A 415-amino-acid polypeptide reads, in one-letter code: Homoserine O-succinyltransferase (415 aa).

The span at 1 to 26 (MTSPALTAASVTPSRNTTSPDTTSHR) shows a compositional bias: polar residues. Positions 1–27 (MTSPALTAASVTPSRNTTSPDTTSHRP) are disordered. An AB hydrolase-1 domain is found at 71-386 (NAVLICHALN…HGHDAFLLED (316 aa)). The Nucleophile role is filled by Ser177. Arg247 provides a ligand contact to substrate. Active-site residues include Asp346 and His379. Substrate is bound at residue Asp380.

It belongs to the AB hydrolase superfamily. MetX family. As to quaternary structure, homodimer.

The protein localises to the cytoplasm. The enzyme catalyses L-homoserine + succinyl-CoA = O-succinyl-L-homoserine + CoA. Its pathway is amino-acid biosynthesis; L-methionine biosynthesis via de novo pathway; O-succinyl-L-homoserine from L-homoserine: step 1/1. Functionally, transfers a succinyl group from succinyl-CoA to L-homoserine, forming succinyl-L-homoserine. In Bordetella avium (strain 197N), this protein is Homoserine O-succinyltransferase.